A 485-amino-acid chain; its full sequence is FAD-dependent monooxygenase elcH (485 aa).

The N-terminal stretch at 1-19 is a signal peptide; the sequence is MFTLRSLAILAVFAATALA. The FAD site is built by Asp-59 and Gly-73. N-linked (GlcNAc...) asparagine glycosylation is found at Asn-126, Asn-147, and Asn-157.

This sequence belongs to the paxM FAD-dependent monooxygenase family. Requires FAD as cofactor.

Its pathway is secondary metabolite biosynthesis. In terms of biological role, FAD-dependent monooxygenase; part of the gene cluster that mediates the biosynthesis of elsinochrome C, a perelyenequinone phytotoxin structurally similar to cercosporin. The first step of elsinochrome C biosynthesis is performed by the polyketide synthase elcA which catalyzes the formation of nor-toralactone. The starter unit acyltransferase (SAT) domain of elcA initiates polyketide extension by the selective utilization of acetyl-CoA, which is elongated to the heptaketide in the beta-ketoacyl synthase (KS) domain by successive condensations with six malonyl units introduced by the malonyl acyltransferase (MAT) domain. The product template (PT) domain catalyzes C4-C9 and C2-C11 aldol cyclizations and dehydrations to a trihydroxynaphthalene, which is thought to be delivered to the thioesterase (TE) domain for product release. The bifunctional enzyme elcB then methylates nor-toralactone to toralactone before conducting an unusual oxidative aromatic ring opening. The next step in perylenequinone biosynthesis is an O-methylation at the nascent OH-6 of the elcB product performed by the O-methyltransferase elcD. The oxidative coupling of the two monomeric naphthol units in perylenequinone biosynthesis is catalyzed by the FAD-dependent monooxygenase elcE and the multicopper oxidase elcG. ElcG might catalyze the first intermolecular coupling in a regio- and stereo-selective manner via a phenol radical coupling mechanism and the elcE could forge the second C-C bond intramolecularly via a hydride transfer mechanism. The fasciclin domain-containing protein elcF might also play a role duting this step. The last piece of the puzzle in the biosynthesis of elsinochrome C is the additional annulation by enolate coupling to afford the dihydrobenzo(ghi)perylenequinone system, catalyzed by the FAD-dependent monooxygenase elcH. This is FAD-dependent monooxygenase elcH from Phaeosphaeria nodorum (strain SN15 / ATCC MYA-4574 / FGSC 10173) (Glume blotch fungus).